Here is a 444-residue protein sequence, read N- to C-terminus: Tubulin beta-7 chain (444 aa).

Residues Gln-11, Glu-69, Ser-138, Gly-142, Thr-143, Gly-144, Asn-204, and Asn-226 each coordinate GTP. Residue Glu-69 participates in Mg(2+) binding.

It belongs to the tubulin family. As to quaternary structure, dimer of alpha and beta chains. A typical microtubule is a hollow water-filled tube with an outer diameter of 25 nm and an inner diameter of 15 nM. Alpha-beta heterodimers associate head-to-tail to form protofilaments running lengthwise along the microtubule wall with the beta-tubulin subunit facing the microtubule plus end conferring a structural polarity. Microtubules usually have 13 protofilaments but different protofilament numbers can be found in some organisms and specialized cells. Requires Mg(2+) as cofactor. As to expression, expressed in roots, leaf sheaths, and suspension cultured cells.

It is found in the cytoplasm. It localises to the cytoskeleton. Its function is as follows. Tubulin is the major constituent of microtubules, a cylinder consisting of laterally associated linear protofilaments composed of alpha- and beta-tubulin heterodimers. Microtubules grow by the addition of GTP-tubulin dimers to the microtubule end, where a stabilizing cap forms. Below the cap, tubulin dimers are in GDP-bound state, owing to GTPase activity of alpha-tubulin. This is Tubulin beta-7 chain (TUBB7) from Oryza sativa subsp. japonica (Rice).